A 188-amino-acid polypeptide reads, in one-letter code: FMN-dependent NADPH-azoreductase (188 aa).

It belongs to the azoreductase type 2 family. As to quaternary structure, homotetramer. The cofactor is FMN.

Functionally, catalyzes the reductive cleavage of azo bond in aromatic azo compounds to the corresponding amines. Requires NADPH, but not NADH, as an electron donor for its activity. This Staphylococcus haemolyticus (strain JCSC1435) protein is FMN-dependent NADPH-azoreductase (azo1).